The following is a 571-amino-acid chain: Sulfite reductase [NADPH] hemoprotein beta-component (571 aa).

C436, C442, C481, and C485 together coordinate [4Fe-4S] cluster. Residue C485 participates in siroheme binding.

This sequence belongs to the nitrite and sulfite reductase 4Fe-4S domain family. In terms of assembly, alpha(8)-beta(8). The alpha component is a flavoprotein, the beta component is a hemoprotein. Siroheme serves as cofactor. The cofactor is [4Fe-4S] cluster.

The enzyme catalyses hydrogen sulfide + 3 NADP(+) + 3 H2O = sulfite + 3 NADPH + 4 H(+). It participates in sulfur metabolism; hydrogen sulfide biosynthesis; hydrogen sulfide from sulfite (NADPH route): step 1/1. In terms of biological role, component of the sulfite reductase complex that catalyzes the 6-electron reduction of sulfite to sulfide. This is one of several activities required for the biosynthesis of L-cysteine from sulfate. The sequence is that of Sulfite reductase [NADPH] hemoprotein beta-component from Anoxybacillus flavithermus (strain DSM 21510 / WK1).